The sequence spans 160 residues: Dihydrofolate reductase (160 aa).

The DHFR domain maps to 1 to 160 (MVKAIWAMDQ…KVAYYHKIAR (160 aa)). 5–7 (IWA) provides a ligand contact to substrate. NADP(+)-binding positions include 6 to 7 (WA) and 14 to 19 (IGNGNS). The substrate site is built by E27 and R32. 43 to 46 (GSAT) contributes to the NADP(+) binding site. R57 contributes to the substrate binding site. Residues 62–65 (LTRN) and 101–106 (CGGAQV) each bind NADP(+). Substrate is bound at residue S120.

It belongs to the dihydrofolate reductase family.

It carries out the reaction (6S)-5,6,7,8-tetrahydrofolate + NADP(+) = 7,8-dihydrofolate + NADPH + H(+). Its pathway is cofactor biosynthesis; tetrahydrofolate biosynthesis; 5,6,7,8-tetrahydrofolate from 7,8-dihydrofolate: step 1/1. Its function is as follows. Key enzyme in folate metabolism. Catalyzes an essential reaction for de novo glycine and purine synthesis, and for DNA precursor synthesis. This Mycoplasma pneumoniae (strain ATCC 29342 / M129 / Subtype 1) (Mycoplasmoides pneumoniae) protein is Dihydrofolate reductase (folA).